The following is a 500-amino-acid chain: Maturase K (500 aa).

The protein belongs to the intron maturase 2 family. MatK subfamily.

It is found in the plastid. Its subcellular location is the chloroplast. Usually encoded in the trnK tRNA gene intron. Probably assists in splicing its own and other chloroplast group II introns. The protein is Maturase K of Proboscidea louisianica (Louisiana Devil's-claw).